The primary structure comprises 45 residues: Mu-conotoxin-like Cal 12.1.2e (45 aa).

4 cysteine pairs are disulfide-bonded: C3–C16, C11–C28, C18–C33, and C27–C39. W17 is modified (6'-bromotryptophan). 4-hydroxyproline is present on P23. Residue W38 is modified to 6'-bromotryptophan. P40 is modified (4-hydroxyproline).

Expressed by the venom duct.

The protein localises to the secreted. In terms of biological role, mu-conotoxins block voltage-gated sodium channels. This toxin reversibly blocks voltage-gated sodium channel in cephalopods, with no alteration in the voltage dependence of sodium conductance or on the kinetics of inactivation. The chain is Mu-conotoxin-like Cal 12.1.2e from Californiconus californicus (California cone).